Here is a 227-residue protein sequence, read N- to C-terminus: Probable septum site-determining protein MinC (227 aa).

Belongs to the MinC family. As to quaternary structure, interacts with MinD and FtsZ.

In terms of biological role, cell division inhibitor that blocks the formation of polar Z ring septums. Rapidly oscillates between the poles of the cell to destabilize FtsZ filaments that have formed before they mature into polar Z rings. Prevents FtsZ polymerization. The chain is Probable septum site-determining protein MinC from Shouchella clausii (strain KSM-K16) (Alkalihalobacillus clausii).